Consider the following 271-residue polypeptide: L-aspartate dehydrogenase (271 aa).

Ala-124 and Asn-192 together coordinate NAD(+). His-222 is an active-site residue.

It belongs to the L-aspartate dehydrogenase family.

The enzyme catalyses L-aspartate + NADP(+) + H2O = oxaloacetate + NH4(+) + NADPH + H(+). The catalysed reaction is L-aspartate + NAD(+) + H2O = oxaloacetate + NH4(+) + NADH + H(+). The protein operates within cofactor biosynthesis; NAD(+) biosynthesis; iminoaspartate from L-aspartate (dehydrogenase route): step 1/1. Functionally, specifically catalyzes the NAD or NADP-dependent dehydrogenation of L-aspartate to iminoaspartate. This chain is L-aspartate dehydrogenase, found in Methanosarcina acetivorans (strain ATCC 35395 / DSM 2834 / JCM 12185 / C2A).